Here is a 275-residue protein sequence, read N- to C-terminus: MSSHREEKVRRIAAPDIAARKGGTPIVCLTAYTAPVAELLDEHCDLLLVGDSVGMVVHGLPNTVGVTLDMMILHGQAVMRGSRRAMVVVDMPFGSYEGAPETAYDNAARLMKETGAQAVKVESGPTVIDTIQYLVKRGIPVMGHVGLRPQAVLVDGGFKAKGKAGEERRRILEEARATADAGAFAVVVEGVAEGLAREITEAIEVPTIGIGASAGCDGQILVTDDMLGLFDWTPKFVRRYGDLRGEIGKAVAAYAEDVRARRFPGPAEIYFAKAG.

Residues Asp-51 and Asp-90 each contribute to the Mg(2+) site. 3-methyl-2-oxobutanoate contacts are provided by residues 51–52 (DS), Asp-90, and Lys-120. Glu-122 lines the Mg(2+) pocket. The Proton acceptor role is filled by Glu-189.

The protein belongs to the PanB family. In terms of assembly, homodecamer; pentamer of dimers. It depends on Mg(2+) as a cofactor.

Its subcellular location is the cytoplasm. It carries out the reaction 3-methyl-2-oxobutanoate + (6R)-5,10-methylene-5,6,7,8-tetrahydrofolate + H2O = 2-dehydropantoate + (6S)-5,6,7,8-tetrahydrofolate. Its pathway is cofactor biosynthesis; (R)-pantothenate biosynthesis; (R)-pantoate from 3-methyl-2-oxobutanoate: step 1/2. Its function is as follows. Catalyzes the reversible reaction in which hydroxymethyl group from 5,10-methylenetetrahydrofolate is transferred onto alpha-ketoisovalerate to form ketopantoate. The polypeptide is 3-methyl-2-oxobutanoate hydroxymethyltransferase (Phenylobacterium zucineum (strain HLK1)).